Reading from the N-terminus, the 1346-residue chain is Proline-rich protein 36 (1346 aa).

6 disordered regions span residues 1–403 (MDNK…TQLI), 426–512 (SVSS…QATP), 537–606 (PLTT…PSPL), 633–679 (PRQT…VSPL), 711–1155 (LETQ…AELA), and 1168–1240 (PPLA…RSPK). Positions 10 to 26 (AGAAARTPAARAPGLLT) are enriched in low complexity. Residues 27-40 (PRPPGSPRPPPPVT) are compositionally biased toward pro residues. 2 stretches are compositionally biased toward low complexity: residues 41 to 55 (PAAL…AVGR) and 86 to 97 (SSRNPASRPPAS). The segment covering 137–152 (SAEETVARGKATEAPK) has biased composition (basic and acidic residues). Residues 165 to 177 (SGPTPGTPSPAMA) are compositionally biased toward low complexity. The span at 191–203 (RPAPSARPRPPTE) shows a compositional bias: pro residues. Polar residues predominate over residues 208–220 (SVSSASEHSTTEP). Low complexity-rich tracts occupy residues 235–255 (QRPA…PARS) and 293–312 (APAL…PSGT). Pro residues-rich tracts occupy residues 329–343 (ATLP…PPPA), 371–380 (PLAPPSPSAP), and 387–397 (PSPPATPPSQV). Positions 426–464 (SVSSPLQSMPPTQANPALPSLPTLLSPLATPPLSAMSPL) are enriched in low complexity. Positions 494-506 (TPPPQASPSPSPP) are enriched in pro residues. A compositionally biased stretch (low complexity) spans 546–558 (PPLVSPSLLASPP). The span at 559-578 (LQAPPHPQAPPSMTTPPMQA) shows a compositional bias: pro residues. The span at 633–647 (PRQTQASLISPSRPA) shows a compositional bias: polar residues. A compositionally biased stretch (pro residues) spans 648–657 (STPPDSPPLQ). Over residues 658–679 (APLSLPASPPLQTSLSPAVSPL) the composition is skewed to low complexity. Residues 724–733 (TPPASLTTPP) are compositionally biased toward polar residues. 2 stretches are compositionally biased toward pro residues: residues 781–821 (ETPP…PALA) and 829–865 (PSPP…PPLS). Positions 866 to 875 (PLATPSPQAP) are enriched in low complexity. Composition is skewed to pro residues over residues 887–917 (FSPP…PSQA), 926–997 (LQVP…PPAS), and 1004–1015 (AKPPPQAPPALA). 3 stretches are compositionally biased toward low complexity: residues 1029 to 1046 (FPGQ…MSPL), 1137 to 1146 (DSGPEGGAAA), and 1224 to 1239 (GKAA…SRSP). Residue Ser-1310 is modified to Phosphoserine.

The protein is Proline-rich protein 36 of Homo sapiens (Human).